The sequence spans 962 residues: Glycine dehydrogenase (decarboxylating) (962 aa).

Position 709 is an N6-(pyridoxal phosphate)lysine (K709).

It belongs to the GcvP family. In terms of assembly, the glycine cleavage system is composed of four proteins: P, T, L and H. Pyridoxal 5'-phosphate is required as a cofactor.

It carries out the reaction N(6)-[(R)-lipoyl]-L-lysyl-[glycine-cleavage complex H protein] + glycine + H(+) = N(6)-[(R)-S(8)-aminomethyldihydrolipoyl]-L-lysyl-[glycine-cleavage complex H protein] + CO2. The glycine cleavage system catalyzes the degradation of glycine. The P protein binds the alpha-amino group of glycine through its pyridoxal phosphate cofactor; CO(2) is released and the remaining methylamine moiety is then transferred to the lipoamide cofactor of the H protein. This is Glycine dehydrogenase (decarboxylating) from Shewanella baltica (strain OS155 / ATCC BAA-1091).